A 352-amino-acid polypeptide reads, in one-letter code: Keratocan (352 aa).

A signal peptide spans 1–20; that stretch reads MAGTICFIMWVLFITDTVWS. In terms of domain architecture, LRRNT spans 33 to 71; that stretch reads DDWTIHDFECPMECFCPPSFPTALYCENRGLKEIPAIPS. Intrachain disulfides connect Cys-42–Cys-48 and Cys-46–Cys-58. LRR repeat units follow at residues 72 to 93, 96 to 117, 122 to 142, 143 to 164, 167 to 180, 193 to 213, 214 to 235, 238 to 258, 263 to 282, and 283 to 304; these read RIWY…PFEN, QLRW…KGAL, KLLF…PLPR, SLEQ…TFSN, NLTL…KLVD, NLMQ…RLPA, NTMQ…YFNV, KVAF…PSRG, SILD…RISA, and HLQH…VICP. An N-linked (GlcNAc...) (keratan sulfate) asparagine glycan is attached at Asn-93. An N-linked (GlcNAc...) (keratan sulfate) asparagine glycan is attached at Asn-167. Asn-222 is a glycosylation site (N-linked (GlcNAc...) asparagine). The N-linked (GlcNAc...) asparagine glycan is linked to Asn-298. The cysteines at positions 303 and 343 are disulfide-linked.

Belongs to the small leucine-rich proteoglycan (SLRP) family. SLRP class II subfamily. In terms of processing, binds keratan sulfate chains. In terms of tissue distribution, cornea (at protein level). Increased expression in the stroma of keratoconus corneas. Also detected in trachea, and in low levels, in intestine, skeletal muscle, ovary, lung and putamen.

Its subcellular location is the secreted. The protein resides in the extracellular space. It is found in the extracellular matrix. May be important in developing and maintaining corneal transparency and for the structure of the stromal matrix. The polypeptide is Keratocan (KERA) (Homo sapiens (Human)).